A 560-amino-acid chain; its full sequence is Dihydroxy-acid dehydratase (560 aa).

Cys-50 provides a ligand contact to [2Fe-2S] cluster. Asp-82 serves as a coordination point for Mg(2+). Cys-123 contacts [2Fe-2S] cluster. Positions 124 and 125 each coordinate Mg(2+). An N6-carboxylysine modification is found at Lys-125. Position 195 (Cys-195) interacts with [2Fe-2S] cluster. Residue Glu-447 participates in Mg(2+) binding. Ser-473 serves as the catalytic Proton acceptor.

Belongs to the IlvD/Edd family. As to quaternary structure, homodimer. Requires [2Fe-2S] cluster as cofactor. The cofactor is Mg(2+).

It catalyses the reaction (2R)-2,3-dihydroxy-3-methylbutanoate = 3-methyl-2-oxobutanoate + H2O. The enzyme catalyses (2R,3R)-2,3-dihydroxy-3-methylpentanoate = (S)-3-methyl-2-oxopentanoate + H2O. It participates in amino-acid biosynthesis; L-isoleucine biosynthesis; L-isoleucine from 2-oxobutanoate: step 3/4. The protein operates within amino-acid biosynthesis; L-valine biosynthesis; L-valine from pyruvate: step 3/4. Its function is as follows. Functions in the biosynthesis of branched-chain amino acids. Catalyzes the dehydration of (2R,3R)-2,3-dihydroxy-3-methylpentanoate (2,3-dihydroxy-3-methylvalerate) into 2-oxo-3-methylpentanoate (2-oxo-3-methylvalerate) and of (2R)-2,3-dihydroxy-3-methylbutanoate (2,3-dihydroxyisovalerate) into 2-oxo-3-methylbutanoate (2-oxoisovalerate), the penultimate precursor to L-isoleucine and L-valine, respectively. The sequence is that of Dihydroxy-acid dehydratase from Thermosynechococcus vestitus (strain NIES-2133 / IAM M-273 / BP-1).